Here is a 336-residue protein sequence, read N- to C-terminus: Sex determination protein tasselseed-2 (336 aa).

59-83 is an NAD(+) binding site; sequence IVTGGARGIGEAIVRLFAKHGARVV. S194 contributes to the substrate binding site. The Proton acceptor role is filled by Y207.

The protein belongs to the short-chain dehydrogenases/reductases (SDR) family.

Required for stage-specific floral organ abortion. This Zea mays (Maize) protein is Sex determination protein tasselseed-2 (TS2).